A 561-amino-acid polypeptide reads, in one-letter code: Lipase maturation factor 1 (561 aa).

Residues Met1–Gly32 are disordered. At Met1 to Phe42 the chain is on the cytoplasmic side. The chain crosses the membrane as a helical span at residues Trp43–Phe65. Residues His66 to Asp120 are Lumenal-facing. The chain crosses the membrane as a helical span at residues Ala121–Met144. Over Ala145 to Met200 the chain is Cytoplasmic. The chain crosses the membrane as a helical span at residues Trp201–Ala214. Residues Gly215–Gly285 lie on the Lumenal side of the membrane. Residues Ala286–Ala314 form a helical membrane-spanning segment. Residues Cys315–Thr360 lie on the Cytoplasmic side of the membrane. A helical transmembrane segment spans residues Val361–Ser382. Over Pro383–Glu561 the chain is Lumenal.

It belongs to the lipase maturation factor family. In terms of assembly, interacts with LPL and SEL1L.

It is found in the endoplasmic reticulum membrane. In terms of biological role, involved in the maturation of specific proteins in the endoplasmic reticulum. Required for maturation and transport of active lipoprotein lipase (LPL) through the secretory pathway. Each LMF1 molecule chaperones 50 or more molecules of LPL. This chain is Lipase maturation factor 1 (LMF1), found in Bos taurus (Bovine).